Reading from the N-terminus, the 145-residue chain is Lysozyme-like protein 4 (145 aa).

Residues 1–19 (MKASVVLSLIGYLVVPSDT) form the signal peptide. One can recognise a C-type lysozyme domain in the interval 20–145 (AVLGRCVVAK…LARWLDGCKL (126 aa)). 4 cysteine pairs are disulfide-bonded: Cys25–Cys143, Cys49–Cys130, Cys84–Cys95, and Cys91–Cys109. Glu54 is a catalytic residue.

It belongs to the glycosyl hydrolase 22 family. As to quaternary structure, monomer.

It is found in the secreted. The protein localises to the cytoplasmic vesicle. Its subcellular location is the secretory vesicle. It localises to the acrosome. The protein resides in the cell projection. It is found in the cilium. The protein localises to the flagellum. May be involved in fertilization. Has no detectable bacteriolytic and lysozyme activities in vitro. This is Lysozyme-like protein 4 (LYZL4) from Bos taurus (Bovine).